Consider the following 104-residue polypeptide: Large ribosomal subunit protein uL24 (104 aa).

This sequence belongs to the universal ribosomal protein uL24 family. Part of the 50S ribosomal subunit.

One of two assembly initiator proteins, it binds directly to the 5'-end of the 23S rRNA, where it nucleates assembly of the 50S subunit. Functionally, one of the proteins that surrounds the polypeptide exit tunnel on the outside of the subunit. This chain is Large ribosomal subunit protein uL24, found in Caulobacter vibrioides (strain ATCC 19089 / CIP 103742 / CB 15) (Caulobacter crescentus).